We begin with the raw amino-acid sequence, 102 residues long: Glutaredoxin-C13 (102 aa).

In terms of domain architecture, Glutaredoxin spans Met1–Leu101. Cys21 and Cys24 are joined by a disulfide.

This sequence belongs to the glutaredoxin family. CC-type subfamily.

The protein localises to the cytoplasm. Its function is as follows. Has a glutathione-disulfide oxidoreductase activity in the presence of NADPH and glutathione reductase. Reduces low molecular weight disulfides and proteins. The sequence is that of Glutaredoxin-C13 (GRXC13) from Arabidopsis thaliana (Mouse-ear cress).